Reading from the N-terminus, the 219-residue chain is Charged multivesicular body protein 5 (219 aa).

Basic residues predominate over residues 1–10; it reads MNRFFGKAKP. The tract at residues 1–21 is disordered; it reads MNRFFGKAKPKAPPPSLTDCI. Residues 26-179 are a coiled coil; the sequence is SRAESIDKKI…LGDELLADED (154 aa). Position 86 is a phosphoserine (Ser-86). Positions 188–219 are disordered; it reads SAPAIPEGVPTDTKNKDGVLVDEFGLPQIPAS.

It belongs to the SNF7 family. As to quaternary structure, probable peripherally associated component of the endosomal sorting required for transport complex III (ESCRT-III). ESCRT-III components are thought to multimerize to form a flat lattice on the perimeter membrane of the endosome. Several assembly forms of ESCRT-III may exist that interact and act sequentially. Interacts with VTA1. Interacts with CHMP2A. Interacts with VTA1; the interaction involves soluble CHMP5. Interacts with NOD2. Interacts with BROX. Post-translationally, ISGylated. Isgylation inhibits its interaction with VTA1.

The protein resides in the cytoplasm. The protein localises to the cytosol. Its subcellular location is the endosome membrane. It localises to the midbody. In terms of biological role, probable peripherally associated component of the endosomal sorting required for transport complex III (ESCRT-III) which is involved in multivesicular bodies (MVBs) formation and sorting of endosomal cargo proteins into MVBs. MVBs contain intraluminal vesicles (ILVs) that are generated by invagination and scission from the limiting membrane of the endosome and mostly are delivered to lysosomes enabling degradation of membrane proteins, such as stimulated growth factor receptors, lysosomal enzymes and lipids. The MVB pathway appears to require the sequential function of ESCRT-O, -I,-II and -III complexes. ESCRT-III proteins mostly dissociate from the invaginating membrane before the ILV is released. The ESCRT machinery also functions in topologically equivalent membrane fission events, such as the terminal stages of cytokinesis. ESCRT-III proteins are believed to mediate the necessary vesicle extrusion and/or membrane fission activities, possibly in conjunction with the AAA ATPase VPS4. The protein is Charged multivesicular body protein 5 (Chmp5) of Mus musculus (Mouse).